A 131-amino-acid chain; its full sequence is D-ribose pyranase (131 aa).

H20 serves as the catalytic Proton donor. Substrate is bound by residues D28, H98, and 120-122; that span reads YAN.

Belongs to the RbsD / FucU family. RbsD subfamily. In terms of assembly, homodecamer.

The protein localises to the cytoplasm. The catalysed reaction is beta-D-ribopyranose = beta-D-ribofuranose. The protein operates within carbohydrate metabolism; D-ribose degradation; D-ribose 5-phosphate from beta-D-ribopyranose: step 1/2. Catalyzes the interconversion of beta-pyran and beta-furan forms of D-ribose. This Clostridium perfringens (strain 13 / Type A) protein is D-ribose pyranase.